The sequence spans 48 residues: Large ribosomal subunit protein bL34 (48 aa).

This sequence belongs to the bacterial ribosomal protein bL34 family.

In Mycoplasma pneumoniae (strain ATCC 29342 / M129 / Subtype 1) (Mycoplasmoides pneumoniae), this protein is Large ribosomal subunit protein bL34 (rpmH).